The following is a 425-amino-acid chain: Non-structural protein 2 (425 aa).

The stretch at 29–64 (VSFDELVALREENAKLKQENEALKAKLHRLESDWTT) forms a coiled coil.

In Banna virus (BAV), this protein is Non-structural protein 2 (Segment-6).